The sequence spans 205 residues: Nucleoside triphosphate pyrophosphatase (205 aa).

The active-site Proton acceptor is the aspartate 76.

The protein belongs to the Maf family. A divalent metal cation is required as a cofactor.

It is found in the cytoplasm. It catalyses the reaction a ribonucleoside 5'-triphosphate + H2O = a ribonucleoside 5'-phosphate + diphosphate + H(+). The enzyme catalyses a 2'-deoxyribonucleoside 5'-triphosphate + H2O = a 2'-deoxyribonucleoside 5'-phosphate + diphosphate + H(+). Its function is as follows. Nucleoside triphosphate pyrophosphatase. May have a dual role in cell division arrest and in preventing the incorporation of modified nucleotides into cellular nucleic acids. The sequence is that of Nucleoside triphosphate pyrophosphatase from Orientia tsutsugamushi (strain Boryong) (Rickettsia tsutsugamushi).